The chain runs to 130 residues: Histone H2A type 2 (130 aa).

Residues 1–22 (MSGRGKQGGKTRAKSKTRSSRA) are disordered. Position 2 is an N-acetylserine (S2). S2 is modified (phosphoserine). K6 carries the post-translational modification N6-(2-hydroxyisobutyryl)lysine. K6 carries the post-translational modification N6-acetyllysine. Over residues 7–19 (QGGKTRAKSKTRS) the composition is skewed to basic residues. K10 is modified (N6-(2-hydroxyisobutyryl)lysine; alternate). An N6-lactoyllysine; alternate modification is found at K10. Position 10 is an N6-succinyllysine (K10). Glycyl lysine isopeptide (Lys-Gly) (interchain with G-Cter in ubiquitin) cross-links involve residues K14 and K16. K37 is subject to N6-(2-hydroxyisobutyryl)lysine; alternate. An N6-(2-hydroxyisobutyryl)lysine modification is found at K76. K96 carries the post-translational modification N6-(2-hydroxyisobutyryl)lysine; alternate. K96 is subject to N6-succinyllysine. An N6-glutaryllysine; alternate modification is found at K96. Q105 carries the N5-methylglutamine modification. At K119 the chain carries N6-(2-hydroxyisobutyryl)lysine; alternate. Position 119 is an N6-glutaryllysine; alternate (K119). K120 is covalently cross-linked (Glycyl lysine isopeptide (Lys-Gly) (interchain with G-Cter in ubiquitin)).

The protein belongs to the histone H2A family. As to quaternary structure, the nucleosome is a histone octamer containing two molecules each of H2A, H2B, H3 and H4 assembled in one H3-H4 heterotetramer and two H2A-H2B heterodimers. The octamer wraps approximately 147 bp of DNA. In terms of processing, monoubiquitination of Lys-120 (H2AK119Ub) gives a specific tag for epigenetic transcriptional repression. Following DNA double-strand breaks (DSBs), it is ubiquitinated through 'Lys-63' linkage of ubiquitin moieties, leading to the recruitment of repair proteins to sites of DNA damage. H2AK119Ub and ionizing radiation-induced 'Lys-63'-linked ubiquitination are distinct events. Phosphorylation on Ser-2 is enhanced during mitosis. Phosphorylation on Ser-2 directly represses transcription. Post-translationally, glutamine methylation at Gln-105 (H2AQ104me) by FBL is specifically dedicated to polymerase I. It is present at 35S ribosomal DNA locus and impairs binding of the FACT complex.

The protein localises to the nucleus. The protein resides in the chromosome. Core component of nucleosome. Nucleosomes wrap and compact DNA into chromatin, limiting DNA accessibility to the cellular machineries which require DNA as a template. Histones thereby play a central role in transcription regulation, DNA repair, DNA replication and chromosomal stability. DNA accessibility is regulated via a complex set of post-translational modifications of histones, also called histone code, and nucleosome remodeling. The chain is Histone H2A type 2 from Xenopus laevis (African clawed frog).